The chain runs to 342 residues: Uroporphyrinogen decarboxylase (342 aa).

Substrate is bound by residues 21–25 (RQAGR), aspartate 71, tyrosine 148, serine 203, and histidine 316.

The protein belongs to the uroporphyrinogen decarboxylase family. Homodimer.

Its subcellular location is the cytoplasm. It catalyses the reaction uroporphyrinogen III + 4 H(+) = coproporphyrinogen III + 4 CO2. It functions in the pathway porphyrin-containing compound metabolism; protoporphyrin-IX biosynthesis; coproporphyrinogen-III from 5-aminolevulinate: step 4/4. Catalyzes the decarboxylation of four acetate groups of uroporphyrinogen-III to yield coproporphyrinogen-III. In Campylobacter curvus (strain 525.92), this protein is Uroporphyrinogen decarboxylase.